Consider the following 81-residue polypeptide: Small ribosomal subunit protein bS16 (81 aa).

This sequence belongs to the bacterial ribosomal protein bS16 family.

The protein is Small ribosomal subunit protein bS16 of Alkaliphilus oremlandii (strain OhILAs) (Clostridium oremlandii (strain OhILAs)).